A 90-amino-acid chain; its full sequence is Small ribosomal subunit protein bS20 (90 aa).

The segment covering 1-10 (MANHKSTQKS) has biased composition (polar residues). The tract at residues 1-25 (MANHKSTQKSIRQDQKRNLINKSRK) is disordered.

Belongs to the bacterial ribosomal protein bS20 family.

Binds directly to 16S ribosomal RNA. In Orientia tsutsugamushi (strain Boryong) (Rickettsia tsutsugamushi), this protein is Small ribosomal subunit protein bS20.